The primary structure comprises 215 residues: Protein-methionine-sulfoxide reductase heme-binding subunit MsrQ (215 aa).

The next 6 membrane-spanning stretches (helical) occupy residues Ala17–Ala37, Phe50–Pro70, Ala85–Asp105, Pro121–Asn141, Trp152–Leu172, and Ile177–Val197.

The protein belongs to the MsrQ family. As to quaternary structure, heterodimer of a catalytic subunit (MsrP) and a heme-binding subunit (MsrQ). It depends on FMN as a cofactor. Heme b serves as cofactor.

It localises to the cell inner membrane. In terms of biological role, part of the MsrPQ system that repairs oxidized periplasmic proteins containing methionine sulfoxide residues (Met-O), using respiratory chain electrons. Thus protects these proteins from oxidative-stress damage caused by reactive species of oxygen and chlorine generated by the host defense mechanisms. MsrPQ is essential for the maintenance of envelope integrity under bleach stress, rescuing a wide series of structurally unrelated periplasmic proteins from methionine oxidation. MsrQ provides electrons for reduction to the reductase catalytic subunit MsrP, using the quinone pool of the respiratory chain. This Agrobacterium fabrum (strain C58 / ATCC 33970) (Agrobacterium tumefaciens (strain C58)) protein is Protein-methionine-sulfoxide reductase heme-binding subunit MsrQ.